The following is a 714-amino-acid chain: Mitochondrial potassium channel ATP-binding subunit (714 aa).

Residues 1-25 (MLVHLFRVGIRGGPVPRWSLQSLRF) constitute a mitochondrion transit peptide. 4 helical membrane passes run 127-147 (LLAL…NVQI), 178-198 (IQLL…LVLL), 278-298 (LMLA…GSGL), and 365-385 (NIAF…LVAG). An ABC transmembrane type-1 domain is found at 132–419 (LAIVLALGAA…LSVLFGQVVR (288 aa)). The 238-residue stretch at 454–691 (ITFQNVSFSY…GGLYAELIRR (238 aa)) folds into the ABC transporter domain. ATP is bound at residue 489–496 (GQSGGGKT).

The protein belongs to the ABC transporter superfamily. ABCB family. Multidrug resistance exporter (TC 3.A.1.201) subfamily. As to quaternary structure, the mitochondrial potassium channel (mitoK(ATP)) is composed of 4 subunits of CCDC51/MITOK and 4 subunits of ABCB8/MITOSUR. Physically interacts with PAAT. Interacts with Neuropilin-1 (NRP1) in mitochondria. Strong expression is found in the heart, brain and testis. In the testis, expressed both in the somatic Sertoli cells and peritubular cells and in the germline (spermatogonia and pachytene spermatocytes). Also expressed in the lung, liver, intestine and kidney.

The protein resides in the mitochondrion inner membrane. Channel activity inhibited by ATP via ABCB8/MITOSUR subunit. Functionally, ATP-binding subunit of the mitochondrial ATP-gated potassium channel (mitoK(ATP)). v. An increase in ATP intracellular levels closes the channel, inhibiting K(+) transport, whereas a decrease in ATP levels enhances K(+) uptake in the mitochondrial matrix. Plays a role in mitochondrial iron transport. Required for maintenance of normal cardiac function, possibly by influencing mitochondrial iron export and regulating the maturation of cytosolic iron sulfur cluster-containing enzymes. The sequence is that of Mitochondrial potassium channel ATP-binding subunit from Rattus norvegicus (Rat).